Consider the following 302-residue polypeptide: MREKRTISNKDTNYLKFPNKLQRYSRFLSRKISNTSPEKQPKKNIKEHCLSSYHKEHSVKPKQNSGNVAAKEDKDTQHLQNNVANEEATECLTRSNLKKLQEKIFDRELNDIACDHCLCSTENRRDIKYSRLWFLFELEMSENWNENLRLSCYNKYVYSAIDESWKMENILLKEQEKHYEYFPIGQLLIPNNIDYTNKQKRKENIEDLTIEIDSIIETNHQKKRFLPQSVLIKREDEIAFDDFHLDARKVLNDLSATSENPFSSSPNTKKIKSKGKTLEVVPKKKNKKIIGALERKLHIDEN.

2 disordered regions span residues 53 to 83 and 257 to 276; these read YHKE…QNNV and TSEN…SKGK. The span at 257–268 shows a compositional bias: polar residues; the sequence is TSENPFSSSPNT.

As to quaternary structure, component of the monopolin complex composed of at least CSM1, LRS4 and MAM1. The complex associates with the kinetochore during late pachytene. In terms of processing, phosphorylated by CDC5. This phosphorylation is required for the location to the kinetochores during late pachytene.

The protein resides in the nucleus. Functionally, component of the monopolin complex which promotes monoorientation during meiosis I, required for chromosome segregation during meiosis. This chain is Monopolin complex subunit MAM1 (MAM1), found in Saccharomyces cerevisiae (strain ATCC 204508 / S288c) (Baker's yeast).